The chain runs to 482 residues: Ribulose bisphosphate carboxylase large chain (482 aa).

Residues 1–2 (MS) constitute a propeptide that is removed on maturation. Residue Pro-3 is modified to N-acetylproline. An N6,N6,N6-trimethyllysine modification is found at Lys-14. 2 residues coordinate substrate: Asn-123 and Thr-173. Catalysis depends on Lys-175, which acts as the Proton acceptor. Lys-177 contributes to the substrate binding site. Mg(2+)-binding residues include Lys-201, Asp-203, and Glu-204. At Lys-201 the chain carries N6-carboxylysine. His-294 acts as the Proton acceptor in catalysis. Positions 295, 327, and 379 each coordinate substrate.

This sequence belongs to the RuBisCO large chain family. Type I subfamily. In terms of assembly, heterohexadecamer of 8 large chains and 8 small chains; disulfide-linked. The disulfide link is formed within the large subunit homodimers. It depends on Mg(2+) as a cofactor. Post-translationally, the disulfide bond which can form in the large chain dimeric partners within the hexadecamer appears to be associated with oxidative stress and protein turnover.

It is found in the plastid. The protein resides in the chloroplast. The catalysed reaction is 2 (2R)-3-phosphoglycerate + 2 H(+) = D-ribulose 1,5-bisphosphate + CO2 + H2O. The enzyme catalyses D-ribulose 1,5-bisphosphate + O2 = 2-phosphoglycolate + (2R)-3-phosphoglycerate + 2 H(+). RuBisCO catalyzes two reactions: the carboxylation of D-ribulose 1,5-bisphosphate, the primary event in carbon dioxide fixation, as well as the oxidative fragmentation of the pentose substrate in the photorespiration process. Both reactions occur simultaneously and in competition at the same active site. This is Ribulose bisphosphate carboxylase large chain from Phytolacca americana (American pokeweed).